The following is a 244-amino-acid chain: 1-(5-phosphoribosyl)-5-[(5-phosphoribosylamino)methylideneamino] imidazole-4-carboxamide isomerase (244 aa).

Residue Asp10 is the Proton acceptor of the active site. Residue Asp132 is the Proton donor of the active site.

Belongs to the HisA/HisF family.

The protein resides in the cytoplasm. It catalyses the reaction 1-(5-phospho-beta-D-ribosyl)-5-[(5-phospho-beta-D-ribosylamino)methylideneamino]imidazole-4-carboxamide = 5-[(5-phospho-1-deoxy-D-ribulos-1-ylimino)methylamino]-1-(5-phospho-beta-D-ribosyl)imidazole-4-carboxamide. The protein operates within amino-acid biosynthesis; L-histidine biosynthesis; L-histidine from 5-phospho-alpha-D-ribose 1-diphosphate: step 4/9. In Xanthomonas oryzae pv. oryzae (strain MAFF 311018), this protein is 1-(5-phosphoribosyl)-5-[(5-phosphoribosylamino)methylideneamino] imidazole-4-carboxamide isomerase.